Reading from the N-terminus, the 370-residue chain is UDP-N-acetylglucosamine--N-acetylmuramyl-(pentapeptide) pyrophosphoryl-undecaprenol N-acetylglucosamine transferase (370 aa).

UDP-N-acetyl-alpha-D-glucosamine is bound by residues 15-17 (TGG), N129, R170, S200, I253, and Q298.

This sequence belongs to the glycosyltransferase 28 family. MurG subfamily.

It is found in the cell inner membrane. It carries out the reaction di-trans,octa-cis-undecaprenyl diphospho-N-acetyl-alpha-D-muramoyl-L-alanyl-D-glutamyl-meso-2,6-diaminopimeloyl-D-alanyl-D-alanine + UDP-N-acetyl-alpha-D-glucosamine = di-trans,octa-cis-undecaprenyl diphospho-[N-acetyl-alpha-D-glucosaminyl-(1-&gt;4)]-N-acetyl-alpha-D-muramoyl-L-alanyl-D-glutamyl-meso-2,6-diaminopimeloyl-D-alanyl-D-alanine + UDP + H(+). It participates in cell wall biogenesis; peptidoglycan biosynthesis. In terms of biological role, cell wall formation. Catalyzes the transfer of a GlcNAc subunit on undecaprenyl-pyrophosphoryl-MurNAc-pentapeptide (lipid intermediate I) to form undecaprenyl-pyrophosphoryl-MurNAc-(pentapeptide)GlcNAc (lipid intermediate II). This is UDP-N-acetylglucosamine--N-acetylmuramyl-(pentapeptide) pyrophosphoryl-undecaprenol N-acetylglucosamine transferase from Salinibacter ruber (strain DSM 13855 / M31).